The primary structure comprises 166 residues: Lipoprotein signal peptidase (166 aa).

4 consecutive transmembrane segments (helical) span residues 9-29 (ASGALAPWLGISLIVILFDQL), 45-65 (ALTSFFNLVLVYNRGAAFGFL), 71-91 (WQRWAFTALGVGATLVICFLL), and 100-120 (FSLSLALILGGALGNVIDRLV). Catalysis depends on residues D126 and D144. A helical membrane pass occupies residues 135–155 (WHFPAFNLADSAITIGAVLLI).

It belongs to the peptidase A8 family.

It is found in the cell inner membrane. The enzyme catalyses Release of signal peptides from bacterial membrane prolipoproteins. Hydrolyzes -Xaa-Yaa-Zaa-|-(S,diacylglyceryl)Cys-, in which Xaa is hydrophobic (preferably Leu), and Yaa (Ala or Ser) and Zaa (Gly or Ala) have small, neutral side chains.. It participates in protein modification; lipoprotein biosynthesis (signal peptide cleavage). Functionally, this protein specifically catalyzes the removal of signal peptides from prolipoproteins. The polypeptide is Lipoprotein signal peptidase (Burkholderia multivorans (strain ATCC 17616 / 249)).